The primary structure comprises 152 residues: SsrA-binding protein (152 aa).

The protein belongs to the SmpB family.

It is found in the cytoplasm. Required for rescue of stalled ribosomes mediated by trans-translation. Binds to transfer-messenger RNA (tmRNA), required for stable association of tmRNA with ribosomes. tmRNA and SmpB together mimic tRNA shape, replacing the anticodon stem-loop with SmpB. tmRNA is encoded by the ssrA gene; the 2 termini fold to resemble tRNA(Ala) and it encodes a 'tag peptide', a short internal open reading frame. During trans-translation Ala-aminoacylated tmRNA acts like a tRNA, entering the A-site of stalled ribosomes, displacing the stalled mRNA. The ribosome then switches to translate the ORF on the tmRNA; the nascent peptide is terminated with the 'tag peptide' encoded by the tmRNA and targeted for degradation. The ribosome is freed to recommence translation, which seems to be the essential function of trans-translation. This Rickettsia montanensis protein is SsrA-binding protein.